We begin with the raw amino-acid sequence, 434 residues long: Glutamate-1-semialdehyde 2,1-aminomutase (434 aa).

K265 carries the N6-(pyridoxal phosphate)lysine modification.

Belongs to the class-III pyridoxal-phosphate-dependent aminotransferase family. HemL subfamily. Homodimer. It depends on pyridoxal 5'-phosphate as a cofactor.

The protein localises to the cytoplasm. The catalysed reaction is (S)-4-amino-5-oxopentanoate = 5-aminolevulinate. Its pathway is porphyrin-containing compound metabolism; protoporphyrin-IX biosynthesis; 5-aminolevulinate from L-glutamyl-tRNA(Glu): step 2/2. In Ruminiclostridium cellulolyticum (strain ATCC 35319 / DSM 5812 / JCM 6584 / H10) (Clostridium cellulolyticum), this protein is Glutamate-1-semialdehyde 2,1-aminomutase.